We begin with the raw amino-acid sequence, 166 residues long: uncharacterized protein (166 aa).

To B.subtilis YpjQ.

This is an uncharacterized protein from Bacillus subtilis (strain 168).